Reading from the N-terminus, the 553-residue chain is General alpha-glucoside permease (553 aa).

Positions 1–21 (MSVDENQLENGQLLSSENEAS) are enriched in polar residues. Residues 1-26 (MSVDENQLENGQLLSSENEASSPFKE) form a disordered region. The Cytoplasmic segment spans residues 1–33 (MSVDENQLENGQLLSSENEASSPFKESIPSRSS). The chain crosses the membrane as a helical span at residues 34–54 (LYLIALTVSLLGVQLTWSVEL). The Extracellular segment spans residues 55-72 (GYGTPYLFSLGLRKEWTS). Residues 73–93 (IIWIAGPLTGILIQPIAGILS) form a helical membrane-spanning segment. Residues 94-111 (DRVNSRIGRRRPFMLCAS) are Cytoplasmic-facing. Residues 112–132 (LLGTFSLFLMGWAPDICLFIF) traverse the membrane as a helical segment. Residues 133-140 (SNEVLMKR) lie on the Extracellular side of the membrane. Residues 141 to 161 (VTIVLATISIYLLDVAVNVVM) form a helical membrane-spanning segment. Residues 162–186 (ASTRSLIVDSVRSDQQHEANSWAGR) lie on the Cytoplasmic side of the membrane. Residues 187 to 207 (MIGVGNVLGYLLGYLPLYRIF) form a helical membrane-spanning segment. Residues 208–216 (SFLNFTQLQ) lie on the Extracellular side of the membrane. The helical transmembrane segment at 217–237 (VFCVLASISLVLTVTITTIFV) threads the bilayer. Residues 238 to 280 (SERRFPPVEHEKSVAGEIFEFFTTMRQSITALPFTLKRICFVQ) lie on the Cytoplasmic side of the membrane. The helical transmembrane segment at 281-301 (FFAYFGWFPFLFYITTYVGIL) threads the bilayer. Residues 302-322 (YLRHAPKGHEEDWDMATRQGS) are Extracellular-facing. A helical transmembrane segment spans residues 323-343 (FALLLFAIISLAANTALPLLL). Topologically, residues 344–424 (EDTEDDEEDE…SKVQIKGLTL (81 aa)) are cytoplasmic. The tract at residues 368-399 (NDLGNIRTGTNTPRLGNLSETTSFRSENEPSR) is disordered. The span at 374–392 (RTGTNTPRLGNLSETTSFR) shows a compositional bias: polar residues. Residues 425–445 (PILWLSSHVLFGVCMLSTIFL) form a helical membrane-spanning segment. At 446 to 452 (QTSWQAQ) the chain is on the extracellular side. The chain crosses the membrane as a helical span at residues 453–473 (AMVAICGLSWACTLWIPYSLF). Over 474–494 (SSEIGKLGLRESSGKMIGVHN) the chain is Cytoplasmic. The helical transmembrane segment at 495–515 (VFISAPQVLSTIIATIVFIQS) threads the bilayer. At 516–521 (EGSHRD) the chain is on the extracellular side. A helical transmembrane segment spans residues 522 to 542 (IADNSIAWVLRIGGISAFLAA). The Cytoplasmic portion of the chain corresponds to 543–553 (YQCRHLLPINF).

Belongs to the glycoside-pentoside-hexuronide (GPH) cation symporter transporter (TC 2.A.2.4) family.

It is found in the membrane. Functionally, responsible for the transport of maltose and sucrose into the cell, with the concomitant uptake of protons (symport system). This Schizosaccharomyces pombe (strain 972 / ATCC 24843) (Fission yeast) protein is General alpha-glucoside permease (sut1).